Here is a 246-residue protein sequence, read N- to C-terminus: Probable transcriptional regulatory protein YebC (246 aa).

The tract at residues methionine 1–lysine 20 is disordered.

It belongs to the TACO1 family.

It localises to the cytoplasm. The polypeptide is Probable transcriptional regulatory protein YebC (Salmonella choleraesuis (strain SC-B67)).